Consider the following 309-residue polypeptide: MTVTVKMLVDKLKLKVVYGNEELLAKAITTADISRPGLEMVGYFDYYSPERLQLVGMKEWTYLKTMTANNRYSVFANIFREETPAVIVARGLEIPEEMLQAAKENGVAVLQGRNSTSSLSGDMSWYLNSQLAERTSVHGVLVDIYGMGVLIQGDSGIGKSETALELVKRGHRLVADDRVDVYAKDEGTLWGEPAEILLHLLEIRGVGIIDVMSLYGASAVRDSSQVQLCICLEHFENDEVFDRLGNSNEEIELQGVKIPRIRIPVKTGRNVSVVIEAAAMNYRAKQMGYDATKTFKDRLTDLISKNGED.

Catalysis depends on residues His-138 and Lys-159. 153–160 (GDSGIGKS) is a binding site for ATP. Residue Ser-160 coordinates Mg(2+). The active-site Proton acceptor; for phosphorylation activity. Proton donor; for dephosphorylation activity is Asp-177. Residues 201-210 (LEIRGVGIID) form an important for the catalytic mechanism of both phosphorylation and dephosphorylation region. Residue Glu-202 coordinates Mg(2+). Residue Arg-243 is part of the active site. Residues 264–269 (PVKTGR) form an important for the catalytic mechanism of dephosphorylation region.

It belongs to the HPrK/P family. In terms of assembly, homohexamer. Mg(2+) serves as cofactor.

The catalysed reaction is [HPr protein]-L-serine + ATP = [HPr protein]-O-phospho-L-serine + ADP + H(+). It catalyses the reaction [HPr protein]-O-phospho-L-serine + phosphate + H(+) = [HPr protein]-L-serine + diphosphate. Functionally, catalyzes the ATP- as well as the pyrophosphate-dependent phosphorylation of a specific serine residue in HPr, a phosphocarrier protein of the phosphoenolpyruvate-dependent sugar phosphotransferase system (PTS). HprK/P also catalyzes the pyrophosphate-producing, inorganic phosphate-dependent dephosphorylation (phosphorolysis) of seryl-phosphorylated HPr (P-Ser-HPr). The two antagonistic activities of HprK/P are regulated by several intracellular metabolites, which change their concentration in response to the absence or presence of rapidly metabolisable carbon sources (glucose, fructose, etc.) in the growth medium. Therefore, by controlling the phosphorylation state of HPr, HPrK/P is a sensor enzyme that plays a major role in the regulation of carbon metabolism and sugar transport: it mediates carbon catabolite repression (CCR), and regulates PTS-catalyzed carbohydrate uptake and inducer exclusion. This Streptococcus thermophilus (strain ATCC BAA-250 / LMG 18311) protein is HPr kinase/phosphorylase.